The following is a 205-amino-acid chain: Rho-related protein racI (205 aa).

12–19 (GDSKTGKT) lines the GTP pocket. The Effector region motif lies at 34–42 (YVPSHVDAT). GTP-binding positions include 59 to 63 (DSSAL) and 119 to 122 (TKCD). A Cysteine methyl ester modification is found at Cys202. Cys202 carries S-geranylgeranyl cysteine lipidation. Residues 203 to 205 (IIQ) constitute a propeptide, removed in mature form.

This sequence belongs to the small GTPase superfamily. Rho family.

Its subcellular location is the cell membrane. This is Rho-related protein racI (racI) from Dictyostelium discoideum (Social amoeba).